The primary structure comprises 202 residues: Large ribosomal subunit protein bL25 (202 aa).

A disordered region spans residues 1–21 (MSKESYELKAEARERVGKGSS).

Belongs to the bacterial ribosomal protein bL25 family. CTC subfamily. In terms of assembly, part of the 50S ribosomal subunit; part of the 5S rRNA/L5/L18/L25 subcomplex. Contacts the 5S rRNA. Binds to the 5S rRNA independently of L5 and L18.

Functionally, this is one of the proteins that binds to the 5S RNA in the ribosome where it forms part of the central protuberance. This is Large ribosomal subunit protein bL25 from Agrobacterium fabrum (strain C58 / ATCC 33970) (Agrobacterium tumefaciens (strain C58)).